The following is a 92-amino-acid chain: FMRFamide-like neuropeptides 16 (92 aa).

The N-terminal stretch at Met1–Ala24 is a signal peptide. Positions Ala25–Ser55 are excised as a propeptide. Phe64, Phe74, and Phe84 each carry phenylalanine amide. A propeptide spanning residues Ser87–Gln92 is cleaved from the precursor.

This sequence belongs to the FARP (FMRFamide related peptide) family. As to expression, each flp gene is expressed in a distinct set of neurons.

The protein localises to the secreted. FMRFamides and FMRFamide-like peptides are neuropeptides. AQTFVRF-amide inhibits the activity of dissected pharyngeal myogenic muscle system. This chain is FMRFamide-like neuropeptides 16, found in Caenorhabditis elegans.